A 338-amino-acid chain; its full sequence is Large ribosomal subunit protein uL10 (338 aa).

Positions 303–338 are disordered; sequence VEVSAAPAAEEEKEEEKKEEEKKEEDTGAAGLALLF. Positions 317–328 are enriched in basic and acidic residues; sequence EEKKEEEKKEED.

Belongs to the universal ribosomal protein uL10 family. In terms of assembly, part of the 50S ribosomal subunit. Forms part of the ribosomal stalk which helps the ribosome interact with GTP-bound translation factors. Forms a heptameric L10(L12)2(L12)2(L12)2 complex, where L10 forms an elongated spine to which the L12 dimers bind in a sequential fashion.

Its function is as follows. Forms part of the ribosomal stalk, playing a central role in the interaction of the ribosome with GTP-bound translation factors. This Methanocaldococcus jannaschii (strain ATCC 43067 / DSM 2661 / JAL-1 / JCM 10045 / NBRC 100440) (Methanococcus jannaschii) protein is Large ribosomal subunit protein uL10.